A 28-amino-acid chain; its full sequence is Arylalkyl acylamidase (28 aa).

In terms of assembly, homotetramer.

The enzyme catalyses an N-acetylarylalkylamine + H2O = an aralkylamine + acetate. Its activity is regulated as follows. Activated by divalent metal ions. Inhibited by certain thiol reagents. Shows a strict specificity for N-acetyl arylalkylamines but not acetanilide derivatives. This Pseudomonas putida (Arthrobacter siderocapsulatus) protein is Arylalkyl acylamidase.